The primary structure comprises 263 residues: 7beta-hydroxysteroid dehydrogenase (263 aa).

NADP(+)-binding positions include 17–21 (TEGVG), 40–41 (RR), and 66–67 (DF). Tyr156 functions as the Proton acceptor in the catalytic mechanism. Ser240 provides a ligand contact to NADP(+).

This sequence belongs to the short-chain dehydrogenases/reductases (SDR) family. Homodimer.

The catalysed reaction is a 7beta-hydroxysteroid + NADP(+) = a 7-oxosteroid + NADPH + H(+). The enzyme catalyses 7-oxolithocholate + NADPH + H(+) = ursodeoxycholate + NADP(+). It catalyses the reaction 7beta-hydroxy-3,12-dioxo-5beta-cholan-24-oate + NADP(+) = dehydrocholate + NADPH + H(+). It carries out the reaction ursocholate + NADP(+) = 3alpha,12alpha-dihydroxy-7-oxo-5beta-cholanate + NADPH + H(+). 7beta-hydroxysteroid dehydrogenase that catalyzes the reduction of the 7-oxo group of 7-oxo-lithocholate (7-oxo-LCA), to yield ursodeoxycholate (UDCA). As C.aerofaciens is an intestinal bacterium, this enzyme probably contributes to the formation of UDCA in the human colon. UDCA is regarded as a chemopreventive beneficial secondary bile acid due to its low hydrophobicity; it protects hepatocytes and bile duct epithelial cells against necrosis and apoptosis induced by more hydrophobic secondary bile acids like deoxycholate (DCA). This enzyme is also able to catalyze the reverse reaction, i.e. the oxidation of the 7beta-hydroxy group of UDCA to 7-oxo-LCA. To a lesser extent, is also active on the taurine- and glycine-conjugates of ursodeoxycholate. It is specific for NADPH/NADP(+) as the electron acceptor/donor since it is not active with NADH/NAD(+). In the presence of NADPH, 7beta-HSDH can also reduce dehydrocholate. And is also able to oxidize ursocholate. The polypeptide is 7beta-hydroxysteroid dehydrogenase (Collinsella aerofaciens (strain ATCC 25986 / DSM 3979 / JCM 10188 / KCTC 3647 / NCTC 11838 / VPI 1003)).